Here is a 363-residue protein sequence, read N- to C-terminus: UDP-N-acetylglucosamine--N-acetylmuramyl-(pentapeptide) pyrophosphoryl-undecaprenol N-acetylglucosamine transferase (363 aa).

UDP-N-acetyl-alpha-D-glucosamine-binding positions include 10–12 (TGG), Asn124, Ser195, Ile250, and Gln295.

It belongs to the glycosyltransferase 28 family. MurG subfamily.

The protein resides in the cell membrane. The catalysed reaction is di-trans,octa-cis-undecaprenyl diphospho-N-acetyl-alpha-D-muramoyl-L-alanyl-D-glutamyl-meso-2,6-diaminopimeloyl-D-alanyl-D-alanine + UDP-N-acetyl-alpha-D-glucosamine = di-trans,octa-cis-undecaprenyl diphospho-[N-acetyl-alpha-D-glucosaminyl-(1-&gt;4)]-N-acetyl-alpha-D-muramoyl-L-alanyl-D-glutamyl-meso-2,6-diaminopimeloyl-D-alanyl-D-alanine + UDP + H(+). Its pathway is cell wall biogenesis; peptidoglycan biosynthesis. Its function is as follows. Cell wall formation. Catalyzes the transfer of a GlcNAc subunit on undecaprenyl-pyrophosphoryl-MurNAc-pentapeptide (lipid intermediate I) to form undecaprenyl-pyrophosphoryl-MurNAc-(pentapeptide)GlcNAc (lipid intermediate II). The protein is UDP-N-acetylglucosamine--N-acetylmuramyl-(pentapeptide) pyrophosphoryl-undecaprenol N-acetylglucosamine transferase of Listeria welshimeri serovar 6b (strain ATCC 35897 / DSM 20650 / CCUG 15529 / CIP 8149 / NCTC 11857 / SLCC 5334 / V8).